The following is a 1021-amino-acid chain: MSDNMQIDSPSPQEIDEGLYSRQLYVLGKEAMLKMQNANVLIIGLNGLGIEIAKNIALAGVKSLSLYDPKPVSITDLSTQFFLSESEIGQPRDVASREKLAELNSYVPINVVDNIDEETLLKFKCIVSTNISLEEQVKINNITHANNIGYINADIKGLFGQIFVDFGDKFTVIDQTGEEPLSGIVSDIEKNGTVTMLDDNRHGLQDGDYVKFAEVEGMPKLNEGNPHKVEVLGPYAFKIKIDESYGEYVKGGLYTQVKVPKDLSFEPLTKQLAAPEYLISDFAKFDKPAQLHLGFQALHAFQTKHQGELPAPYNEQDATEAFRYAEELATQNPSILGEDKLDEKYLKELFYQARGDIPGVVAFYGGLIAQEVLKNCSSKFTPIKQWLYFDSLESLPSETEYPRNEENNKPIGSRYDGQIAVFGKAFQEKIANLKVFLVGSGAIGCEMLKNWAMMGLGSGPEGKIFITDNDSIEKSNLNRQFLFRPKDVGKNKSDVAALAVQQMNPDLKGKIDSKLDKVGPETEDIFDDKFWTQLNIVVNALDNVEARTYVDRRCVFYKKPLLESGTLGTKGNTQVVIPNLTESYSSSQDPPEKSIPLCTLRSFPNKIDHTIAWAKSLFQGYFAESPESVNLYLSQPNYVEQTLKQNPDIKGTLENISKYLNNRPYTFEDCIKWARQEFETKFNHDIQQLLYNFPPDAKTSTGAPFWSGPKRAPKPLEFDINNKDHLDFIIGGANLLAFIYGLKEPNATVDDFKKVLEQVIIEPFQPKSGVEIAATDAEAEEQANNLSGSIDDEQIRKIAASLPEPSTLAGYRLTPIEFEKDDDTNHHIEFITAASNCRALNYGIEIADAHKTKFIAGKIIPAIATTTALVTGLVCLELYKVVDGKDDIEQYKNGFINLALPFIGFSEPIKSPEGKYNNKKFDQIWDRFELNGDITLQELLDHFEKEEGLTISMLSYGVSLLYASFFPPKKVKDRLGLKLTSLIKEVSKKEVPSHVKNLIFEICCDDEEGEDVEVPYICVKL.

Residues Arg-22, Ala-442, and Asp-468 each contribute to the ATP site. A Mg(2+)-binding site is contributed by Asp-470. Residues Arg-479, Lys-492, Val-518, and 542–543 (DN) each bind ATP. A Mg(2+)-binding site is contributed by Asp-542. The active-site Glycyl thioester intermediate is Cys-598.

Belongs to the ubiquitin-activating E1 family. Monomer.

The protein resides in the cytoplasm. Its subcellular location is the nucleus. It carries out the reaction ATP + ubiquitin + [E1 ubiquitin-activating enzyme]-L-cysteine = AMP + diphosphate + S-ubiquitinyl-[E1 ubiquitin-activating enzyme]-L-cysteine.. Its pathway is protein modification; protein ubiquitination. E1 ubiquitin-activating enzyme that catalyzes the first step in ubiquitin conjugation to mark cellular proteins for degradation through the ubiquitin-proteasome system. Activates ubiquitin by first adenylating its C-terminal glycine residue with ATP, and thereafter linking this residue to the side chain of a cysteine residue in E1, yielding a ubiquitin-E1 thioester and free AMP. This Candida albicans (strain WO-1) (Yeast) protein is Ubiquitin-activating enzyme E1 1 (UBA1).